The sequence spans 425 residues: MAKLNPKFISLILFALVVIVSAEVIFEEKFEDGWEKRWVKSDWKKDDNTAGEWKHTAGNWSGDANDKGIQTSEDYRFYAISAEFPEFSNKDKTLVFQFSVKHEQKLDCGGGYMKLLSDDVDQTKFGGDTPYSIMFGPDICGYSTKKVHAILTYNGTNHLIKKEVPCETDQLTHVYTFVLRPDATYSILIDNVEKQTGSLYSDWDLLPAKKIKDPSAKKPEDWDDKEYIPDPEDTKPAGYDDIPKEIPDTDAKKPEDWDDEEDGEWTAPTIPNPEYNGEWKPKKIKNPAYKGKWKAPMIDNPEFKDDPELYVFPKLKYVGVELWQVKSGSLFDNVLVSDDPEYAKKLAEETWGKHKDAEKAAFDEAEKKREEEESKDAPAESDAEEEAEDDDNEGDDSDNESKSEETKEAEETKEAEETDAAHDEL.

A signal peptide spans 1 to 22; it reads MAKLNPKFISLILFALVVIVSA. Asparagine 59 is a glycosylation site (N-linked (GlcNAc...) asparagine). The cysteines at positions 108 and 140 are disulfide-linked. An alpha-D-glucoside contacts are provided by tyrosine 112, lysine 114, tyrosine 131, and aspartate 138. A glycan (N-linked (GlcNAc...) asparagine) is linked at asparagine 154. 7 tandem repeats follow at residues 194–205, 213–224, 230–241, 248–259, 263–273, 277–287, and 291–301. The 4 X approximate repeats stretch occupies residues 194–259; that stretch reads KQTGSLYSDW…DAKKPEDWDD (66 aa). Composition is skewed to basic and acidic residues over residues 213-235 and 241-255; these read DPSA…EDTK and DIPK…KKPE. A disordered region spans residues 213–281; the sequence is DPSAKKPEDW…NPEYNGEWKP (69 aa). The interval 263–301 is 3 X approximate repeats; sequence GEWTAPTIPNPEYNGEWKPKKIKNPAYKGKWKAPMIDNP. Glutamate 321 contacts an alpha-D-glucoside. The segment covering 348–378 has biased composition (basic and acidic residues); the sequence is EETWGKHKDAEKAAFDEAEKKREEEESKDAP. The disordered stretch occupies residues 348–425; that stretch reads EETWGKHKDA…EETDAAHDEL (78 aa). The segment covering 379 to 398 has biased composition (acidic residues); it reads AESDAEEEAEDDDNEGDDSD. Residues serine 381 and serine 397 each carry the phosphoserine modification. N-linked (GlcNAc...) asparagine glycosylation is present at asparagine 399. A compositionally biased stretch (basic and acidic residues) spans 399–412; the sequence is NESKSEETKEAEET. Positions 422 to 425 match the Prevents secretion from ER motif; that stretch reads HDEL.

It belongs to the calreticulin family.

Its subcellular location is the endoplasmic reticulum lumen. Its function is as follows. Molecular calcium-binding chaperone promoting folding, oligomeric assembly and quality control in the ER via the calreticulin/calnexin cycle. This lectin may interact transiently with almost all of the monoglucosylated glycoproteins that are synthesized in the ER. The protein is Calreticulin-1 (CRT1) of Arabidopsis thaliana (Mouse-ear cress).